A 289-amino-acid polypeptide reads, in one-letter code: MSYVAAEPGVLISPTDDLQSPRSAPAAHDENADGITGGTRDDSAPNSRFQLGRRIPEATAQEGFLVRPFTQQCQIIHTEGDHAVIGVSPGNSYFSRQRLRDLGLWGLTNFDRVDFVYTDVHVAESYEALGDSAIEARRKAVKNIRGVRAKITTTVNELDPAGARLCVRPMSEFQSNEAYRELHADLLTRLKDDEDLRAVCQDLVRRFLSTKVGPRQGATATQEQVCMDYICAEAPLFLDTPAILGVPSSLNCYHQSLPLAEMLYARGSGLRASRNQGHAIVTPDGSPAE.

The tract at residues 1 to 48 is disordered; sequence MSYVAAEPGVLISPTDDLQSPRSAPAAHDENADGITGGTRDDSAPNSR. The Nucleophile role is filled by Ser-88. Residues Asn-91, 229 to 233, and Tyr-253 each bind substrate; that span reads YICAE.

It belongs to the CDPS family. As to quaternary structure, homodimer.

It catalyses the reaction 2 L-tyrosyl-tRNA(Tyr) = cyclo(L-tyrosyl-L-tyrosyl) + 2 tRNA(Tyr). Its function is as follows. Involved in the biosynthesis of mycocyclosin. It uses activated amino acids in the form of aminoacyl-tRNAs (aa-tRNAs) as substrates to catalyze the ATP-independent formation of cyclodipeptides which are intermediates in diketopiperazine (DKP) biosynthetic pathways. Catalyzes the formation of cyclo(L-Tyr-L-Tyr) (cYY) from L-tyrosyl-tRNA(Tyr). The polypeptide is Cyclo(L-tyrosyl-L-tyrosyl) synthase (Mycobacterium tuberculosis (strain CDC 1551 / Oshkosh)).